The primary structure comprises 375 residues: 4,4'-diaponeurosporenoate glycosyltransferase (375 aa).

Helical transmembrane passes span 3 to 23 (WLSR…ALIF), 164 to 184 (FYEG…NVFS), 277 to 297 (IMTA…GLCL), and 330 to 350 (FSNL…KIFI).

The protein belongs to the glycosyltransferase 2 family. CrtQ subfamily.

The protein localises to the cell membrane. It functions in the pathway carotenoid biosynthesis; staphyloxanthin biosynthesis; staphyloxanthin from farnesyl diphosphate: step 4/5. Functionally, catalyzes the glycosylation of 4,4'-diaponeurosporenoate, i.e. the esterification of glucose at the C1'' position with the carboxyl group of 4,4'-diaponeurosporenic acid, to form glycosyl-4,4'-diaponeurosporenoate. This is a step in the biosynthesis of staphyloxanthin, an orange pigment present in most staphylococci strains. The sequence is that of 4,4'-diaponeurosporenoate glycosyltransferase (crtQ) from Staphylococcus aureus (strain Mu50 / ATCC 700699).